A 1548-amino-acid chain; its full sequence is Zinc finger MYM-type protein 4 (1548 aa).

A2 carries the N-acetylalanine modification. T107 is modified (phosphothreonine). Residues S110 and S122 each carry the phosphoserine modification. Glycyl lysine isopeptide (Lys-Gly) (interchain with G-Cter in SUMO2) cross-links involve residues K140 and K149. Phosphoserine is present on S162. The interval 162–189 (SKETFSGKEKNRDLTYEREKRLDKPHKD) is disordered. K195 participates in a covalent cross-link: Glycyl lysine isopeptide (Lys-Gly) (interchain with G-Cter in SUMO2). At S197 the chain carries Phosphoserine. Glycyl lysine isopeptide (Lys-Gly) (interchain with G-Cter in SUMO2) cross-links involve residues K201 and K232. At S242 the chain carries Phosphoserine. K250 is covalently cross-linked (Glycyl lysine isopeptide (Lys-Gly) (interchain with G-Cter in SUMO1); alternate). Residue K250 forms a Glycyl lysine isopeptide (Lys-Gly) (interchain with G-Cter in SUMO2); alternate linkage. Residues K260, K271, K273, K289, K327, K400, K428, and K430 each participate in a glycyl lysine isopeptide (Lys-Gly) (interchain with G-Cter in SUMO2) cross-link. 9 MYM-type zinc fingers span residues 362-402 (QLFC…PKDV), 414-457 (KDFC…RHEV), 464-499 (HKLCSDACFSKFRSANNLTMNCCENCGGYCYSGSGQ), 510-544 (KKFCSSSCITAYKQKSAKITPCALCKSLRSSAEMI), 554-592 (ELFCSVNCLSAYRVKMVTSAGVQVQCNSCKTSAIPQYHL), 600-631 (RNFCSYSCVVAFQNLFNKPTGMNSSVVPLSQG), 708-742 (FQFCGKNCSDEYKKINNVMAMCEYCKIEKIVKETV), 749-788 (KSFCSEGCKLLYKHDLAKRWGNHCKMCSYCLQTSPKLVQN), and 795-829 (EEFCCEECMSKYTVLFYQMAKCDACKRQGKLSESL). Position 1030 is a phosphoserine (S1030). Residues K1035 and K1061 each participate in a glycyl lysine isopeptide (Lys-Gly) (interchain with G-Cter in SUMO2) cross-link. Phosphoserine is present on residues S1064 and S1071. Glycyl lysine isopeptide (Lys-Gly) (interchain with G-Cter in SUMO2) cross-links involve residues K1080 and K1127. Over residues 1124 to 1134 (SELKQFSKGET) the composition is skewed to basic and acidic residues. Disordered stretches follow at residues 1124 to 1183 (SELK…KSIV) and 1231 to 1260 (KCGGVEQASSSPRSDPLGSTQDHALSQESS). Over residues 1160 to 1181 (SRTRRRHRDGFPQPRRRGRKKS) the composition is skewed to basic residues. 2 positions are modified to phosphoserine: S1181 and S1256. The span at 1237-1260 (QASSSPRSDPLGSTQDHALSQESS) shows a compositional bias: polar residues. K1431 participates in a covalent cross-link: Glycyl lysine isopeptide (Lys-Gly) (interchain with G-Cter in SUMO2). Phosphoserine is present on residues S1539, S1542, and S1547.

As to expression, expressed at higher level in heart, skeletal muscle, kidney and liver.

Plays a role in the regulation of cell morphology and cytoskeletal organization. The polypeptide is Zinc finger MYM-type protein 4 (ZMYM4) (Homo sapiens (Human)).